A 349-amino-acid chain; its full sequence is Mitomycin biosynthesis 6-O-methyltransferase (349 aa).

Residues serine 167, glycine 190, 213–214 (ER), 240–241 (DF), and lysine 255 contribute to the S-adenosyl-L-methionine site. Histidine 259 serves as the catalytic Proton acceptor. Asparagine 288 is a substrate binding site.

It belongs to the class I-like SAM-binding methyltransferase superfamily. Cation-independent O-methyltransferase family. COMT subfamily. Homodimer.

It carries out the reaction 6-demethylmitomycin A + S-adenosyl-L-methionine = mitomycin A + S-adenosyl-L-homocysteine. The catalysed reaction is 6-demethylmitomycin B + S-adenosyl-L-methionine = mitomycin B + S-adenosyl-L-homocysteine. With respect to regulation, completely inhibited by Zn(2+) and Cu(2+). Its function is as follows. Involved in the biosynthesis of the quinone methoxy group present in the mitomycin A and B, which are used as anticancer agents. In vitro, catalyzes the 6-O-methylation of both C9-beta- and C9-alpha-configured 6-hydroxymitomycins via the transfer of the S-methyl group of S-adenosyl-L-methionine (AdoMet) to the 6-demethylmitomycin A and B. It can also use hydroxyquinone as substrate. This is Mitomycin biosynthesis 6-O-methyltransferase from Streptomyces lavendulae.